A 458-amino-acid chain; its full sequence is UPF0210 protein Maeo_1412 (458 aa).

Belongs to the UPF0210 family.

This Methanococcus aeolicus (strain ATCC BAA-1280 / DSM 17508 / OCM 812 / Nankai-3) protein is UPF0210 protein Maeo_1412.